A 249-amino-acid polypeptide reads, in one-letter code: MLFNPPLVPARLIARYKRFLFDAELESGEIITGSCPNTGSMQGLTTPGSRIWLSEHEGAKRKYRHVFELIEADGTTVGVNTAMPNRTAAEAIALGQISDLGDYTTVRREQNYGRNSRIDLLLTDPLRTTTYVEVKNVHFMREPGLAEFPDTVTARGAKHLEELGDMADAGHRAVMLFVIQRHDCDRFRVCGDLDVVYATAFQRALKRGVEVYALKCRVSPTEITPAGLIPIDEPGIAALNTKYKISAEG.

It belongs to the SfsA family.

The polypeptide is Sugar fermentation stimulation protein homolog (Rhizobium rhizogenes (strain K84 / ATCC BAA-868) (Agrobacterium radiobacter)).